The chain runs to 232 residues: Orotidine 5'-phosphate decarboxylase (232 aa).

Substrate is bound by residues Asp16, Lys38, 65–74 (DLKLHDIGNT), Thr119, Arg180, Gln189, Gly209, and Arg210. Lys67 serves as the catalytic Proton donor.

Belongs to the OMP decarboxylase family. Type 1 subfamily. Homodimer.

It carries out the reaction orotidine 5'-phosphate + H(+) = UMP + CO2. It functions in the pathway pyrimidine metabolism; UMP biosynthesis via de novo pathway; UMP from orotate: step 2/2. Its function is as follows. Catalyzes the decarboxylation of orotidine 5'-monophosphate (OMP) to uridine 5'-monophosphate (UMP). This chain is Orotidine 5'-phosphate decarboxylase, found in Methylorubrum extorquens (strain PA1) (Methylobacterium extorquens).